Consider the following 447-residue polypeptide: Kynurenine 3-monooxygenase (447 aa).

It belongs to the aromatic-ring hydroxylase family. KMO subfamily. Requires FAD as cofactor.

It catalyses the reaction L-kynurenine + NADPH + O2 + H(+) = 3-hydroxy-L-kynurenine + NADP(+) + H2O. It participates in cofactor biosynthesis; NAD(+) biosynthesis; quinolinate from L-kynurenine: step 1/3. Its function is as follows. Catalyzes the hydroxylation of L-kynurenine (L-Kyn) to form 3-hydroxy-L-kynurenine (L-3OHKyn). Required for synthesis of quinolinic acid. The protein is Kynurenine 3-monooxygenase of Flavobacterium psychrophilum (strain ATCC 49511 / DSM 21280 / CIP 103535 / JIP02/86).